We begin with the raw amino-acid sequence, 626 residues long: 4-hydroxy-3-methylbut-2-en-1-yl diphosphate synthase (flavodoxin) (626 aa).

[4Fe-4S] cluster-binding residues include Cys-521, Cys-524, Cys-555, and Glu-562.

This sequence belongs to the IspG family. [4Fe-4S] cluster is required as a cofactor.

The enzyme catalyses (2E)-4-hydroxy-3-methylbut-2-enyl diphosphate + oxidized [flavodoxin] + H2O + 2 H(+) = 2-C-methyl-D-erythritol 2,4-cyclic diphosphate + reduced [flavodoxin]. Its pathway is isoprenoid biosynthesis; isopentenyl diphosphate biosynthesis via DXP pathway; isopentenyl diphosphate from 1-deoxy-D-xylulose 5-phosphate: step 5/6. Functionally, converts 2C-methyl-D-erythritol 2,4-cyclodiphosphate (ME-2,4cPP) into 1-hydroxy-2-methyl-2-(E)-butenyl 4-diphosphate. The protein is 4-hydroxy-3-methylbut-2-en-1-yl diphosphate synthase (flavodoxin) of Bacteroides fragilis (strain YCH46).